The primary structure comprises 381 residues: MKRLLLVKYASEIFLKGLNKGKFEKKLKDNIKNILKDVQYNFVMDQGRWFIECSDIEKGIEKLKSVFGVWEICVVDEVEADMEKIKEQSLKNALESKGSTFKVLTKRADKSFPGTSMEVSREIGAYILQNVPNLSVDIKNPDFFVNIEIRNKAYVYSKKIKAVGGMPYGTNGNTLLMLSGGIDSPVAGYMMARRGVQLNCIYFHSHPYTSERAKEKVKELAGILKGYTGNINLYITPFTEIQMQIIEKCRKDELTIIMRRFMMRIACIIADKYNINSVTTGESIGQVASQTMEGLVVSNQAADRPVFRPLIAMDKVDIMEVAREIGTYETSILPYEDCCTIFVPKHPKTKPRLQEIIKSEENLDIDVLVEEAVCDTEFLSI.

Residues Glu57 to Ile160 form the THUMP domain. ATP is bound by residues Met177–Leu178, Tyr202–Phe203, Arg259, Gly281, and Gln290.

This sequence belongs to the ThiI family.

It is found in the cytoplasm. The enzyme catalyses [ThiI sulfur-carrier protein]-S-sulfanyl-L-cysteine + a uridine in tRNA + 2 reduced [2Fe-2S]-[ferredoxin] + ATP + H(+) = [ThiI sulfur-carrier protein]-L-cysteine + a 4-thiouridine in tRNA + 2 oxidized [2Fe-2S]-[ferredoxin] + AMP + diphosphate. The catalysed reaction is [ThiS sulfur-carrier protein]-C-terminal Gly-Gly-AMP + S-sulfanyl-L-cysteinyl-[cysteine desulfurase] + AH2 = [ThiS sulfur-carrier protein]-C-terminal-Gly-aminoethanethioate + L-cysteinyl-[cysteine desulfurase] + A + AMP + 2 H(+). It participates in cofactor biosynthesis; thiamine diphosphate biosynthesis. In terms of biological role, catalyzes the ATP-dependent transfer of a sulfur to tRNA to produce 4-thiouridine in position 8 of tRNAs, which functions as a near-UV photosensor. Also catalyzes the transfer of sulfur to the sulfur carrier protein ThiS, forming ThiS-thiocarboxylate. This is a step in the synthesis of thiazole, in the thiamine biosynthesis pathway. The sulfur is donated as persulfide by IscS. This chain is Probable tRNA sulfurtransferase, found in Clostridium kluyveri (strain NBRC 12016).